We begin with the raw amino-acid sequence, 243 residues long: 2-C-methyl-D-erythritol 4-phosphate cytidylyltransferase (243 aa).

Belongs to the IspD/TarI cytidylyltransferase family. IspD subfamily.

It carries out the reaction 2-C-methyl-D-erythritol 4-phosphate + CTP + H(+) = 4-CDP-2-C-methyl-D-erythritol + diphosphate. The protein operates within isoprenoid biosynthesis; isopentenyl diphosphate biosynthesis via DXP pathway; isopentenyl diphosphate from 1-deoxy-D-xylulose 5-phosphate: step 2/6. Functionally, catalyzes the formation of 4-diphosphocytidyl-2-C-methyl-D-erythritol from CTP and 2-C-methyl-D-erythritol 4-phosphate (MEP). This chain is 2-C-methyl-D-erythritol 4-phosphate cytidylyltransferase, found in Colwellia psychrerythraea (strain 34H / ATCC BAA-681) (Vibrio psychroerythus).